The following is a 212-amino-acid chain: Large ribosomal subunit protein uL3 (212 aa).

Q153 carries the N5-methylglutamine modification.

This sequence belongs to the universal ribosomal protein uL3 family. As to quaternary structure, part of the 50S ribosomal subunit. Forms a cluster with proteins L14 and L19. In terms of processing, methylated by PrmB.

One of the primary rRNA binding proteins, it binds directly near the 3'-end of the 23S rRNA, where it nucleates assembly of the 50S subunit. This Shewanella pealeana (strain ATCC 700345 / ANG-SQ1) protein is Large ribosomal subunit protein uL3.